The sequence spans 156 residues: Transcription elongation factor GreA 1 (156 aa).

The stretch at 43–74 (RSENAEYSSAKRDLGRLESRLRYLNKQLQYAQ) forms a coiled coil.

The protein belongs to the GreA/GreB family.

Functionally, necessary for efficient RNA polymerase transcription elongation past template-encoded arresting sites. The arresting sites in DNA have the property of trapping a certain fraction of elongating RNA polymerases that pass through, resulting in locked ternary complexes. Cleavage of the nascent transcript by cleavage factors such as GreA or GreB allows the resumption of elongation from the new 3'terminus. GreA releases sequences of 2 to 3 nucleotides. In Lactiplantibacillus plantarum (strain ATCC BAA-793 / NCIMB 8826 / WCFS1) (Lactobacillus plantarum), this protein is Transcription elongation factor GreA 1.